Here is a 485-residue protein sequence, read N- to C-terminus: UDP-N-acetylmuramoyl-L-alanyl-D-glutamate--2,6-diaminopimelate ligase (485 aa).

Serine 30 provides a ligand contact to UDP-N-acetyl-alpha-D-muramoyl-L-alanyl-D-glutamate. Glycine 113 to threonine 119 serves as a coordination point for ATP. UDP-N-acetyl-alpha-D-muramoyl-L-alanyl-D-glutamate-binding positions include threonine 155–threonine 156, serine 182, and arginine 190. Lysine 222 is modified (N6-carboxylysine). Residues arginine 381, aspartate 405 to arginine 408, glycine 455, and glutamate 459 contribute to the meso-2,6-diaminopimelate site. A Meso-diaminopimelate recognition motif motif is present at residues aspartate 405–arginine 408.

The protein belongs to the MurCDEF family. MurE subfamily. The cofactor is Mg(2+). Carboxylation is probably crucial for Mg(2+) binding and, consequently, for the gamma-phosphate positioning of ATP.

It is found in the cytoplasm. It carries out the reaction UDP-N-acetyl-alpha-D-muramoyl-L-alanyl-D-glutamate + meso-2,6-diaminopimelate + ATP = UDP-N-acetyl-alpha-D-muramoyl-L-alanyl-gamma-D-glutamyl-meso-2,6-diaminopimelate + ADP + phosphate + H(+). It functions in the pathway cell wall biogenesis; peptidoglycan biosynthesis. Its function is as follows. Catalyzes the addition of meso-diaminopimelic acid to the nucleotide precursor UDP-N-acetylmuramoyl-L-alanyl-D-glutamate (UMAG) in the biosynthesis of bacterial cell-wall peptidoglycan. This chain is UDP-N-acetylmuramoyl-L-alanyl-D-glutamate--2,6-diaminopimelate ligase, found in Clostridium tetani (strain Massachusetts / E88).